Here is a 476-residue protein sequence, read N- to C-terminus: Bifunctional protein HldE (476 aa).

Residues 1-319 (MKVSLPAFEK…EALALHHGES (319 aa)) are ribokinase. Residue 195-198 (NMSE) participates in ATP binding. Residue aspartate 264 is part of the active site. The segment at 345-476 (MTNGCFDILH…AIIQNIMANQ (132 aa)) is cytidylyltransferase.

This sequence in the N-terminal section; belongs to the carbohydrate kinase PfkB family. The protein in the C-terminal section; belongs to the cytidylyltransferase family. Homodimer.

It carries out the reaction D-glycero-beta-D-manno-heptose 7-phosphate + ATP = D-glycero-beta-D-manno-heptose 1,7-bisphosphate + ADP + H(+). The catalysed reaction is D-glycero-beta-D-manno-heptose 1-phosphate + ATP + H(+) = ADP-D-glycero-beta-D-manno-heptose + diphosphate. Its pathway is nucleotide-sugar biosynthesis; ADP-L-glycero-beta-D-manno-heptose biosynthesis; ADP-L-glycero-beta-D-manno-heptose from D-glycero-beta-D-manno-heptose 7-phosphate: step 1/4. The protein operates within nucleotide-sugar biosynthesis; ADP-L-glycero-beta-D-manno-heptose biosynthesis; ADP-L-glycero-beta-D-manno-heptose from D-glycero-beta-D-manno-heptose 7-phosphate: step 3/4. In terms of biological role, catalyzes the phosphorylation of D-glycero-D-manno-heptose 7-phosphate at the C-1 position to selectively form D-glycero-beta-D-manno-heptose-1,7-bisphosphate. Its function is as follows. Catalyzes the ADP transfer from ATP to D-glycero-beta-D-manno-heptose 1-phosphate, yielding ADP-D-glycero-beta-D-manno-heptose. The protein is Bifunctional protein HldE of Shewanella baltica (strain OS155 / ATCC BAA-1091).